We begin with the raw amino-acid sequence, 227 residues long: E3 ubiquitin-protein ligase ZNRF1 (227 aa).

Residues 1–42 form a disordered region; sequence MGGKQSTAARSRGPFPGVSTDDSAVPPPGGAPHFGHYRTGGG. Gly-2 is lipidated: N-myristoyl glycine. Residues 2 to 10 form a required for endosomal and lysosomal localization and myristoylation region; that stretch reads GGKQSTAAR. Phosphoserine occurs at positions 50, 52, and 53. Residues 65 to 105 form a disordered region; that stretch reads GGVPFSLYTPASRGTGDSERAPGGGGSTSDSTYAHGNGYQE. Tyr-103 carries the phosphotyrosine modification. A Phosphoserine modification is found at Ser-123. An RING-type; atypical zinc finger spans residues 184 to 225; it reads CVICLEELLQGDTIARLPCLCIYHKSCIDSWFEVNRSCPEHP.

Interacts with AKT1, GLUL and TUBB2A. Interacts with ZNRF2. Interacts (via its RING domain) with UBE2N. Interacts (when phosphorylated) with YWHAE. Post-translationally, N-myristoylation targets ZNRF1 to intracellular membranes. Phosphorylated by SRC at Tyr-103; leading to 'Lys-63'-linked ubiquitination of TLR3, lysosomal trafficking and degradation.

It localises to the endosome. The protein resides in the lysosome. The protein localises to the membrane. Its subcellular location is the cytoplasmic vesicle. It is found in the secretory vesicle. It localises to the synaptic vesicle membrane. It catalyses the reaction S-ubiquitinyl-[E2 ubiquitin-conjugating enzyme]-L-cysteine + [acceptor protein]-L-lysine = [E2 ubiquitin-conjugating enzyme]-L-cysteine + N(6)-ubiquitinyl-[acceptor protein]-L-lysine.. It functions in the pathway protein modification; protein ubiquitination. Functionally, E3 ubiquitin-protein ligase that plays a role in different processes including cell differentiation, receptor recycling or regulation of inflammation. Mediates the ubiquitination of AKT1 and GLUL, thereby playing a role in neuron cells differentiation. Plays a role in the establishment and maintenance of neuronal transmission and plasticity. Regulates Schwann cells differentiation by mediating ubiquitination of GLUL. Promotes neurodegeneration by mediating 'Lys-48'-linked polyubiquitination and subsequent degradation of AKT1 in axons: degradation of AKT1 prevents AKT1-mediated phosphorylation of GSK3B, leading to GSK3B activation and phosphorylation of DPYSL2/CRMP2 followed by destabilization of microtubule assembly in axons. Ubiquitinates the Na(+)/K(+) ATPase alpha-1 subunit/ATP1A1 and thereby influences its endocytosis and/or degradation. Controls ligand-induced EGFR signaling via mediating receptor ubiquitination and recruitment of the ESCRT machinery. Acts as a negative feedback mechanism controlling TLR3 trafficking by mediating TLR3 'Lys-63'-linked polyubiquitination to reduce type I IFN production. Modulates inflammation by promoting caveolin-1/CAV1 ubiquitination and degradation to regulate TLR4-activated immune response. The chain is E3 ubiquitin-protein ligase ZNRF1 (Znrf1) from Mus musculus (Mouse).